Consider the following 471-residue polypeptide: MTDLPDSTRWRLWIVAFGFFMQSLDTTIVNTALPSMAQSLGESPLHMHMVIVSYVLTVAVMLPASGWLADKVGVRNIFFTAIVLFTLGSLFCALSGTLNELLLARALQGVGGAMMVPVGRLTVMKIVPREQYMAAMTFVTLPGQVGPLLGPALGGLLVEYASWHWIFLINIPVGIIGAIATLMLMPNYTMQTRRFDLSGFLLLAVGMAVLTLALDGSKGTGLSPLAIAGLVAVGVVALVLYLLHAQNNNRALFSLKLFRTRTFSLGLAGSFAGRIGSGMLPFMTPVFLQIGLGFSPFHAGLMMIPMVLGSMGMKRIVVQVVNRFGYRRVLVATTLGLSLVTLLFMTTALLGWYYVLPFVLFLQGMVNSTRFSSMNTLTLKDLPDNLASSGNSLLSMIMQLSMSIGVTIAGLLLGLFGSQHVSVDSGTTQTVFMYTWLSMASIIALPAFIFARVPNDTHQNVAISRRKRSAQ.

The Periplasmic segment spans residues 1-11 (MTDLPDSTRWR). The chain crosses the membrane as a helical span at residues 12–32 (LWIVAFGFFMQSLDTTIVNTA). The Cytoplasmic portion of the chain corresponds to 33-48 (LPSMAQSLGESPLHMH). A helical transmembrane segment spans residues 49-69 (MVIVSYVLTVAVMLPASGWLA). Topologically, residues 70 to 76 (DKVGVRN) are periplasmic. The helical transmembrane segment at 77-97 (IFFTAIVLFTLGSLFCALSGT) threads the bilayer. The Cytoplasmic segment spans residues 98-101 (LNEL). The helical transmembrane segment at 102–124 (LLARALQGVGGAMMVPVGRLTVM) threads the bilayer. The Periplasmic segment spans residues 125–137 (KIVPREQYMAAMT). Residues 138 to 158 (FVTLPGQVGPLLGPALGGLLV) form a helical membrane-spanning segment. Residues 159-164 (EYASWH) lie on the Cytoplasmic side of the membrane. Residues 165 to 185 (WIFLINIPVGIIGAIATLMLM) traverse the membrane as a helical segment. Topologically, residues 186 to 196 (PNYTMQTRRFD) are periplasmic. Residues 197 to 217 (LSGFLLLAVGMAVLTLALDGS) form a helical membrane-spanning segment. Residues 218–224 (KGTGLSP) lie on the Cytoplasmic side of the membrane. The chain crosses the membrane as a helical span at residues 225 to 245 (LAIAGLVAVGVVALVLYLLHA). Over 246–262 (QNNNRALFSLKLFRTRT) the chain is Periplasmic. Residues 263-283 (FSLGLAGSFAGRIGSGMLPFM) form a helical membrane-spanning segment. Topologically, residues 284 to 285 (TP) are cytoplasmic. The helical transmembrane segment at 286–306 (VFLQIGLGFSPFHAGLMMIPM) threads the bilayer. The Periplasmic portion of the chain corresponds to 307-341 (VLGSMGMKRIVVQVVNRFGYRRVLVATTLGLSLVT). A helical membrane pass occupies residues 342-362 (LLFMTTALLGWYYVLPFVLFL). Residues 363–395 (QGMVNSTRFSSMNTLTLKDLPDNLASSGNSLLS) lie on the Cytoplasmic side of the membrane. Residues 396–416 (MIMQLSMSIGVTIAGLLLGLF) traverse the membrane as a helical segment. Topologically, residues 417–430 (GSQHVSVDSGTTQT) are periplasmic. Residues 431–451 (VFMYTWLSMASIIALPAFIFA) traverse the membrane as a helical segment. At 452 to 471 (RVPNDTHQNVAISRRKRSAQ) the chain is on the cytoplasmic side.

Belongs to the major facilitator superfamily. TCR/Tet family.

It localises to the cell inner membrane. The polypeptide is Putative multidrug resistance protein MdtD (Escherichia coli O6:K15:H31 (strain 536 / UPEC)).